The chain runs to 443 residues: Mimosinase, chloroplastic (443 aa).

The transit peptide at 1–43 directs the protein to the chloroplast; that stretch reads MALSSTFLNPLVSSVAVNPQPKITSGKGFRVNCLIRTQQTVIK. Pyridoxal 5'-phosphate contacts are provided by tyrosine 105, arginine 107, glycine 135, methionine 136, serine 254, and threonine 256. Position 257 is an N6-(pyridoxal phosphate)lysine (lysine 257).

The protein belongs to the trans-sulfuration enzymes family. As to quaternary structure, forms homodimers. May form homotetramers from two homodimers. The cofactor is pyridoxal 5'-phosphate.

The protein resides in the plastid. It localises to the chloroplast. It carries out the reaction L-mimosine + H2O = 3-hydroxy-4H-pyrid-4-one + pyruvate + NH4(+). Its function is as follows. Catalyzes the degradation of mimosine, which is a toxic secondary metabolite found in all Leucaena and Mimosa species. This is Mimosinase, chloroplastic from Leucaena leucocephala (White popinac).